A 224-amino-acid chain; its full sequence is Stage II sporulation protein R (224 aa).

The chain is Stage II sporulation protein R (spoIIR) from Bacillus subtilis (strain 168).